The primary structure comprises 171 residues: Lipoprotein signal peptidase (171 aa).

The next 3 membrane-spanning stretches (helical) occupy residues 7–27 (GLLA…GLYF), 64–84 (IGRW…GLWM), and 88–108 (TSRL…GNAI). Residues D118 and D136 contribute to the active site. Residues 128-148 (SWYVFNVADAAIVAGVIGLIL) form a helical membrane-spanning segment.

This sequence belongs to the peptidase A8 family.

Its subcellular location is the cell inner membrane. It carries out the reaction Release of signal peptides from bacterial membrane prolipoproteins. Hydrolyzes -Xaa-Yaa-Zaa-|-(S,diacylglyceryl)Cys-, in which Xaa is hydrophobic (preferably Leu), and Yaa (Ala or Ser) and Zaa (Gly or Ala) have small, neutral side chains.. It participates in protein modification; lipoprotein biosynthesis (signal peptide cleavage). Its function is as follows. This protein specifically catalyzes the removal of signal peptides from prolipoproteins. In Methylobacterium radiotolerans (strain ATCC 27329 / DSM 1819 / JCM 2831 / NBRC 15690 / NCIMB 10815 / 0-1), this protein is Lipoprotein signal peptidase.